A 636-amino-acid chain; its full sequence is Molybdenum cofactor biosynthesis protein 1 (636 aa).

Positions 1-383 (MAARPLSRML…QMKNRPMILI (383 aa)) are molybdenum cofactor biosynthesis protein A. Serine 64 carries the phosphoserine modification. A Radical SAM core domain is found at 64 to 277 (SFGRQHSYLR…LDTVRQQWPE (214 aa)). Arginine 73 contacts GTP. [4Fe-4S] cluster is bound by residues cysteine 80 and cysteine 84. Residue tyrosine 86 coordinates S-adenosyl-L-methionine. Cysteine 87 contributes to the [4Fe-4S] cluster binding site. Arginine 123 provides a ligand contact to GTP. An S-adenosyl-L-methionine-binding site is contributed by glycine 127. Threonine 154 provides a ligand contact to GTP. Serine 178 is an S-adenosyl-L-methionine binding site. N6-acetyllysine is present on lysine 198. Position 215 (lysine 215) interacts with GTP. Residue methionine 249 participates in S-adenosyl-L-methionine binding. Residues cysteine 312 and cysteine 315 each coordinate [4Fe-4S] cluster. 317 to 319 (RLR) serves as a coordination point for GTP. Cysteine 329 is a [4Fe-4S] cluster binding site. The segment at 414–636 (MSFSSQVATL…GGQRGDFHRA (223 aa)) is molybdenum cofactor biosynthesis protein C. Positions 456–480 (DANSKCLSPGSWASAAPSGPQLTSE) are disordered. Low complexity predominate over residues 463 to 475 (SPGSWASAAPSGP). Lysine 528 carries the N6-acetyllysine modification. Catalysis depends on aspartate 606, which acts as the For molybdenum cofactor biosynthesis protein C activity.

The protein in the C-terminal section; belongs to the MoaC family. It in the N-terminal section; belongs to the radical SAM superfamily. MoaA family. As to quaternary structure, isoform MOCS1A and isoform MOCS1B probably form a heterooligomer. Requires [4Fe-4S] cluster as cofactor. In terms of tissue distribution, isoform MOCS1A and isoform 2 are widely expressed.

It carries out the reaction GTP + AH2 + S-adenosyl-L-methionine = (8S)-3',8-cyclo-7,8-dihydroguanosine 5'-triphosphate + 5'-deoxyadenosine + L-methionine + A + H(+). The catalysed reaction is (8S)-3',8-cyclo-7,8-dihydroguanosine 5'-triphosphate = cyclic pyranopterin phosphate + diphosphate. It functions in the pathway cofactor biosynthesis; molybdopterin biosynthesis. Isoform MOCS1A and isoform MOCS1B probably form a complex that catalyzes the conversion of 5'-GTP to cyclic pyranopterin monophosphate (cPMP). MOCS1A catalyzes the cyclization of GTP to (8S)-3',8-cyclo-7,8-dihydroguanosine 5'-triphosphate and MOCS1B catalyzes the subsequent conversion of (8S)-3',8-cyclo-7,8-dihydroguanosine 5'-triphosphate to cPMP. The sequence is that of Molybdenum cofactor biosynthesis protein 1 (MOCS1) from Homo sapiens (Human).